A 254-amino-acid chain; its full sequence is 3-dehydroquinate dehydratase (254 aa).

3-dehydroquinate is bound by residues 47–49 (EFR) and arginine 83. The Proton donor/acceptor role is filled by histidine 144. The Schiff-base intermediate with substrate role is filled by lysine 171. 3 residues coordinate 3-dehydroquinate: arginine 213, serine 232, and glutamine 236.

It belongs to the type-I 3-dehydroquinase family. In terms of assembly, homodimer.

The enzyme catalyses 3-dehydroquinate = 3-dehydroshikimate + H2O. It participates in metabolic intermediate biosynthesis; chorismate biosynthesis; chorismate from D-erythrose 4-phosphate and phosphoenolpyruvate: step 3/7. In terms of biological role, involved in the third step of the chorismate pathway, which leads to the biosynthesis of aromatic amino acids. Catalyzes the cis-dehydration of 3-dehydroquinate (DHQ) and introduces the first double bond of the aromatic ring to yield 3-dehydroshikimate. This is 3-dehydroquinate dehydratase from Neisseria gonorrhoeae (strain ATCC 700825 / FA 1090).